The primary structure comprises 359 residues: Phosphate acyltransferase (359 aa).

Residues 337-359 (AAGAAQPAPETEVPGAHPSPHVA) are disordered.

It belongs to the PlsX family. As to quaternary structure, homodimer. Probably interacts with PlsY.

Its subcellular location is the cytoplasm. The catalysed reaction is a fatty acyl-[ACP] + phosphate = an acyl phosphate + holo-[ACP]. It functions in the pathway lipid metabolism; phospholipid metabolism. Its function is as follows. Catalyzes the reversible formation of acyl-phosphate (acyl-PO(4)) from acyl-[acyl-carrier-protein] (acyl-ACP). This enzyme utilizes acyl-ACP as fatty acyl donor, but not acyl-CoA. The polypeptide is Phosphate acyltransferase (Cupriavidus necator (strain ATCC 17699 / DSM 428 / KCTC 22496 / NCIMB 10442 / H16 / Stanier 337) (Ralstonia eutropha)).